A 523-amino-acid chain; its full sequence is Bifunctional purine biosynthesis protein PurH (523 aa).

Positions 4-152 (DHIRRPIRRA…KNHPSVAVVT (149 aa)) constitute an MGS-like domain.

Belongs to the PurH family.

It catalyses the reaction (6R)-10-formyltetrahydrofolate + 5-amino-1-(5-phospho-beta-D-ribosyl)imidazole-4-carboxamide = 5-formamido-1-(5-phospho-D-ribosyl)imidazole-4-carboxamide + (6S)-5,6,7,8-tetrahydrofolate. The catalysed reaction is IMP + H2O = 5-formamido-1-(5-phospho-D-ribosyl)imidazole-4-carboxamide. It participates in purine metabolism; IMP biosynthesis via de novo pathway; 5-formamido-1-(5-phospho-D-ribosyl)imidazole-4-carboxamide from 5-amino-1-(5-phospho-D-ribosyl)imidazole-4-carboxamide (10-formyl THF route): step 1/1. Its pathway is purine metabolism; IMP biosynthesis via de novo pathway; IMP from 5-formamido-1-(5-phospho-D-ribosyl)imidazole-4-carboxamide: step 1/1. The polypeptide is Bifunctional purine biosynthesis protein PurH (Mycobacterium marinum (strain ATCC BAA-535 / M)).